Reading from the N-terminus, the 378-residue chain is Putative glutamate--cysteine ligase 2-1 (378 aa).

It belongs to the glutamate--cysteine ligase type 2 family. YbdK subfamily.

The enzyme catalyses L-cysteine + L-glutamate + ATP = gamma-L-glutamyl-L-cysteine + ADP + phosphate + H(+). ATP-dependent carboxylate-amine ligase which exhibits weak glutamate--cysteine ligase activity. This Corynebacterium efficiens (strain DSM 44549 / YS-314 / AJ 12310 / JCM 11189 / NBRC 100395) protein is Putative glutamate--cysteine ligase 2-1.